The chain runs to 648 residues: Cell surface glycoprotein MUC18 (648 aa).

Residues 1–23 form the signal peptide; the sequence is MGLPKLVCVFLFAACCCCRRAAG. Ig-like V-type domains are found at residues 24-131 and 141-244; these read VPGE…HYVE and PTIQ…KEVT. The Extracellular portion of the chain corresponds to 24 to 563; the sequence is VPGEEKQPVP…LPQPESKGVV (540 aa). Intrachain disulfides connect Cys-50/Cys-118, Cys-163/Cys-225, Cys-274/Cys-322, Cys-367/Cys-409, and Cys-454/Cys-501. The N-linked (GlcNAc...) asparagine glycan is linked to Asn-58. Ig-like C2-type domains follow at residues 246 to 332, 337 to 426, and 432 to 512; these read PVFY…TTIT, PLEL…QLVS, and SPWM…SNTT. Residues 281–304 are disordered; it reads QPHFTINKKDPSTGEMEEESTDEN. Residue Asn-510 is glycosylated (N-linked (GlcNAc...) asparagine). Over residues 532–549 the composition is skewed to polar residues; the sequence is TGLSTLTVSPHTRANSTS. Positions 532 to 554 are disordered; the sequence is TGLSTLTVSPHTRANSTSTEKKL. A helical transmembrane segment spans residues 564–584; sequence IVAVIVCTLVLAVLGAALYFF. The Cytoplasmic segment spans residues 585–648; the sequence is YKKGKLPCGR…QGEKYIDLRH (64 aa). Phosphoserine is present on residues Ser-608 and Ser-616. The disordered stretch occupies residues 625 to 648; that stretch reads LLQGSNGDKRAPGDQGEKYIDLRH. A compositionally biased stretch (basic and acidic residues) spans 631-648; it reads GDKRAPGDQGEKYIDLRH.

In terms of tissue distribution, detected in melanoma cell lines.

Its subcellular location is the membrane. Plays a role in cell adhesion, and in cohesion of the endothelial monolayer at intercellular junctions in vascular tissue. Its expression may allow melanoma cells to interact with cellular elements of the vascular system, thereby enhancing hematogeneous tumor spread. Could be an adhesion molecule active in neural crest cells during embryonic development. Acts as a surface receptor that triggers tyrosine phosphorylation of FYN and PTK2/FAK1, and a transient increase in the intracellular calcium concentration. This chain is Cell surface glycoprotein MUC18 (Mcam), found in Mus musculus (Mouse).